The primary structure comprises 238 residues: Transmembrane protein 127 (238 aa).

At methionine 1 the chain carries N-acetylmethionine. Residues 1–11 (MYAPGGAGLPG) show a composition bias toward gly residues. The tract at residues 1–27 (MYAPGGAGLPGGRRRRSPGGSALPKQP) is disordered. Residue serine 17 is modified to Phosphoserine. 3 consecutive transmembrane segments (helical) span residues 96–116 (IAAF…LDVF), 130–150 (AFAH…SYWA), and 169–189 (VYVT…ASIL).

This sequence belongs to the TMEM127 family. In terms of tissue distribution, widely expressed.

The protein localises to the cell membrane. It localises to the cytoplasm. Functionally, controls cell proliferation acting as a negative regulator of TOR signaling pathway mediated by mTORC1. May act as a tumor suppressor. The chain is Transmembrane protein 127 (TMEM127) from Homo sapiens (Human).